The sequence spans 204 residues: Proteasome subunit beta 2 (204 aa).

A propeptide spans 1-6 (removed in mature form; by autocatalysis); sequence MEVLPG. T7 (nucleophile) is an active-site residue.

The protein belongs to the peptidase T1B family. In terms of assembly, the 20S proteasome core is composed of 14 alpha and 14 beta subunits that assemble into four stacked heptameric rings, resulting in a barrel-shaped structure. The two inner rings, each composed of seven catalytic beta subunits, are sandwiched by two outer rings, each composed of seven alpha subunits. The catalytic chamber with the active sites is on the inside of the barrel. Has a gated structure, the ends of the cylinder being occluded by the N-termini of the alpha-subunits. Is capped at one or both ends by the proteasome regulatory ATPase, PAN.

It localises to the cytoplasm. The enzyme catalyses Cleavage of peptide bonds with very broad specificity.. With respect to regulation, the formation of the proteasomal ATPase PAN-20S proteasome complex, via the docking of the C-termini of PAN into the intersubunit pockets in the alpha-rings, triggers opening of the gate for substrate entry. Interconversion between the open-gate and close-gate conformations leads to a dynamic regulation of the 20S proteasome proteolysis activity. In terms of biological role, component of the proteasome core, a large protease complex with broad specificity involved in protein degradation. The chain is Proteasome subunit beta 2 from Thermofilum pendens (strain DSM 2475 / Hrk 5).